The sequence spans 293 residues: Forkhead box protein N5 (293 aa).

Positions 104 to 152 (TSPPLQLQRQLSNDYSTVEDSEDEAPTSCSDVLTDDDDSYNPWQPKHKR) are disordered. A compositionally biased stretch (polar residues) spans 106–119 (PPLQLQRQLSNDYS). Residues 176-273 (RPPLNYCNLI…NEMHALSDDL (98 aa)) constitute a DNA-binding region (fork-head).

Its subcellular location is the nucleus. This chain is Forkhead box protein N5, found in Xenopus tropicalis (Western clawed frog).